A 268-amino-acid chain; its full sequence is Interleukin-1 alpha (268 aa).

A propeptide spanning residues 1 to 112 (MAKVPDLFED…NTEEEIIKPR (112 aa)) is cleaved from the precursor. Lys82 carries the post-translational modification N6-acetyllysine. A nuclear localization signal (NLS) region spans residues 82–86 (KKRRL). A Phosphoserine modification is found at Ser87. N-linked (GlcNAc...) asparagine glycosylation is found at Asn102 and Asn141.

It belongs to the IL-1 family. As to quaternary structure, monomer. Interacts with TMED10; the interaction mediates the translocation from the cytoplasm into the ERGIC (endoplasmic reticulum-Golgi intermediate compartment) and thereby secretion. Interacts with IL1R1. Interacts with S100A13; this interaction is the first step in the export of IL1A, followed by direct translocation of this complex across the plasma membrane. Acetylated within its nuclear localization sequence, which impacts subcellular localization. In terms of processing, proteolytic processed by CAPN1 in a calcium-dependent manner. Cleavage from 31 kDa precursor to 18 kDa biologically active molecules. Post-translationally, phosphorylated. Phosphorylation greatly enhances susceptibility to digestion and promotes the conversion of pre-IL1A alpha to the biologically active IL1A.

It is found in the nucleus. It localises to the cytoplasm. The protein localises to the secreted. Functionally, cytokine constitutively present intracellularly in nearly all resting non-hematopoietic cells that plays an important role in inflammation and bridges the innate and adaptive immune systems. After binding to its receptor IL1R1 together with its accessory protein IL1RAP, forms the high affinity interleukin-1 receptor complex. Signaling involves the recruitment of adapter molecules such as MYD88, IRAK1 or IRAK4. In turn, mediates the activation of NF-kappa-B and the three MAPK pathways p38, p42/p44 and JNK pathways. Within the cell, acts as an alarmin and cell death results in its liberation in the extracellular space after disruption of the cell membrane to induce inflammation and alert the host to injury or damage. In addition to its role as a danger signal, which occurs when the cytokine is passively released by cell necrosis, directly senses DNA damage and acts as signal for genotoxic stress without loss of cell integrity. This chain is Interleukin-1 alpha (IL1A), found in Bubalus carabanensis (Swamp type water buffalo).